A 326-amino-acid chain; its full sequence is Tetraacyldisaccharide 4'-kinase (326 aa).

Residue 54–61 (SVGGTGKT) participates in ATP binding.

It belongs to the LpxK family.

The enzyme catalyses a lipid A disaccharide + ATP = a lipid IVA + ADP + H(+). It participates in glycolipid biosynthesis; lipid IV(A) biosynthesis; lipid IV(A) from (3R)-3-hydroxytetradecanoyl-[acyl-carrier-protein] and UDP-N-acetyl-alpha-D-glucosamine: step 6/6. Transfers the gamma-phosphate of ATP to the 4'-position of a tetraacyldisaccharide 1-phosphate intermediate (termed DS-1-P) to form tetraacyldisaccharide 1,4'-bis-phosphate (lipid IVA). This chain is Tetraacyldisaccharide 4'-kinase, found in Rickettsia canadensis (strain McKiel).